The chain runs to 144 residues: Nucleoside diphosphate kinase (144 aa).

Residues Lys11, Phe59, Arg87, Thr93, Arg104, and Asn114 each coordinate ATP. His117 functions as the Pros-phosphohistidine intermediate in the catalytic mechanism.

This sequence belongs to the NDK family. In terms of assembly, homotetramer. It depends on Mg(2+) as a cofactor.

The protein localises to the cytoplasm. The enzyme catalyses a 2'-deoxyribonucleoside 5'-diphosphate + ATP = a 2'-deoxyribonucleoside 5'-triphosphate + ADP. It catalyses the reaction a ribonucleoside 5'-diphosphate + ATP = a ribonucleoside 5'-triphosphate + ADP. In terms of biological role, major role in the synthesis of nucleoside triphosphates other than ATP. The ATP gamma phosphate is transferred to the NDP beta phosphate via a ping-pong mechanism, using a phosphorylated active-site intermediate. The chain is Nucleoside diphosphate kinase from Coxiella burnetii (strain CbuG_Q212) (Coxiella burnetii (strain Q212)).